Here is a 367-residue protein sequence, read N- to C-terminus: Germination protease (367 aa).

A propeptide spanning residues methionine 1–aspartate 13 is cleaved from the precursor. Residues lysine 267 to threonine 287 form a disordered region.

The protein belongs to the peptidase A25 family. In terms of assembly, homotetramer. Post-translationally, autoproteolytically processed. The inactive tetrameric zymogen termed p46 autoprocesses to a smaller form termed p41, which is active only during spore germination.

The enzyme catalyses Endopeptidase action with P4 Glu or Asp, P1 preferably Glu &gt; Asp, P1' hydrophobic and P2' Ala.. Initiates the rapid degradation of small, acid-soluble proteins during spore germination. This chain is Germination protease, found in Oceanobacillus iheyensis (strain DSM 14371 / CIP 107618 / JCM 11309 / KCTC 3954 / HTE831).